The chain runs to 324 residues: 4-diphosphocytidyl-2-C-methyl-D-erythritol kinase (324 aa).

The active site involves Lys-11. ATP is bound at residue 108-118 (PIGAGLAGGST). Asp-150 is an active-site residue.

It belongs to the GHMP kinase family. IspE subfamily.

It catalyses the reaction 4-CDP-2-C-methyl-D-erythritol + ATP = 4-CDP-2-C-methyl-D-erythritol 2-phosphate + ADP + H(+). Its pathway is isoprenoid biosynthesis; isopentenyl diphosphate biosynthesis via DXP pathway; isopentenyl diphosphate from 1-deoxy-D-xylulose 5-phosphate: step 3/6. In terms of biological role, catalyzes the phosphorylation of the position 2 hydroxy group of 4-diphosphocytidyl-2C-methyl-D-erythritol. The polypeptide is 4-diphosphocytidyl-2-C-methyl-D-erythritol kinase (Cyanothece sp. (strain PCC 7425 / ATCC 29141)).